We begin with the raw amino-acid sequence, 194 residues long: Imidazoleglycerol-phosphate dehydratase (194 aa).

Belongs to the imidazoleglycerol-phosphate dehydratase family.

The protein resides in the cytoplasm. The catalysed reaction is D-erythro-1-(imidazol-4-yl)glycerol 3-phosphate = 3-(imidazol-4-yl)-2-oxopropyl phosphate + H2O. Its pathway is amino-acid biosynthesis; L-histidine biosynthesis; L-histidine from 5-phospho-alpha-D-ribose 1-diphosphate: step 6/9. In Streptococcus mutans serotype c (strain ATCC 700610 / UA159), this protein is Imidazoleglycerol-phosphate dehydratase.